Reading from the N-terminus, the 268-residue chain is Cell division cycle-associated protein 3 (268 aa).

Disordered stretches follow at residues 1-232 (MGSA…SELK) and 247-268 (GRAW…LVES). S29 and S31 each carry phosphoserine. The residue at position 37 (T37) is a Phosphothreonine. 3 positions are modified to phosphoserine: S44, S64, and S68. The span at 56 to 66 (EGLKHAQDSDP) shows a compositional bias: basic and acidic residues. Position 76 is a phosphothreonine (T76). Phosphoserine occurs at positions 87 and 94. The segment at 91–120 (KQLSEVFETEDSKSNLPPEPVLPPEAPLSS) is F-box-like. The segment covering 107–116 (PPEPVLPPEA) has biased composition (pro residues). A compositionally biased stretch (low complexity) spans 117–126 (PLSSELDLPL). Polar residues-rich tracts occupy residues 128 to 149 (TQLS…SKQV), 158 to 169 (PTETPVASQSSD), and 178 to 194 (PRSS…NSSK). The residue at position 199 (S199) is a Phosphoserine. T202 carries the post-translational modification Phosphothreonine. Polar residues predominate over residues 205 to 215 (QDDNSPGTLTL). At S209 the chain carries Phosphoserine. A Phosphothreonine modification is found at T212. Residues 258–260 (KEN) carry the KEN box motif.

As to quaternary structure, interacts with SKP1. Part of a SCF (SKP1-cullin-F-box) protein ligase complex. In terms of processing, ubiquitinated and degraded by the APC/C-Cdh1 complex.

It is found in the cytoplasm. Its subcellular location is the cytosol. It functions in the pathway protein modification; protein ubiquitination. F-box-like protein which is required for entry into mitosis. Acts by participating in E3 ligase complexes that mediate the ubiquitination and degradation of WEE1 kinase at G2/M phase. In Homo sapiens (Human), this protein is Cell division cycle-associated protein 3 (CDCA3).